The sequence spans 270 residues: ATP synthase subunit a (270 aa).

The next 5 helical transmembrane spans lie at 40–60 (IDSLFFSWFTGLIFLGIFYAV), 98–118 (IAPLALTIFCWVFLMNLMDLV), 143–163 (DVNITMAMALGVFALMIYYSI), 208–228 (LFGNMFAGEVVFILCAAMLPW), and 239–259 (AIFHILVILIQAFVFMMLTIV).

It belongs to the ATPase A chain family. In terms of assembly, F-type ATPases have 2 components, CF(1) - the catalytic core - and CF(0) - the membrane proton channel. CF(1) has five subunits: alpha(3), beta(3), gamma(1), delta(1), epsilon(1). CF(0) has three main subunits: a(1), b(2) and c(9-12). The alpha and beta chains form an alternating ring which encloses part of the gamma chain. CF(1) is attached to CF(0) by a central stalk formed by the gamma and epsilon chains, while a peripheral stalk is formed by the delta and b chains.

The protein localises to the cell inner membrane. Its function is as follows. Key component of the proton channel; it plays a direct role in the translocation of protons across the membrane. This chain is ATP synthase subunit a, found in Vibrio vulnificus (strain CMCP6).